The following is a 590-amino-acid chain: UvrABC system protein C (590 aa).

Residues 14–91 form the GIY-YIG domain; sequence EQPGCYLMKD…IKKHDPKYNV (78 aa). The region spanning 196 to 231 is the UVR domain; the sequence is EDVKRELAEKMHEAAETLEFERAKEYRDQIAAIEMT.

This sequence belongs to the UvrC family. In terms of assembly, interacts with UvrB in an incision complex.

It localises to the cytoplasm. The UvrABC repair system catalyzes the recognition and processing of DNA lesions. UvrC both incises the 5' and 3' sides of the lesion. The N-terminal half is responsible for the 3' incision and the C-terminal half is responsible for the 5' incision. This chain is UvrABC system protein C, found in Geobacillus kaustophilus (strain HTA426).